Consider the following 120-residue polypeptide: NAD(P)H-quinone oxidoreductase subunit 3, chloroplastic (120 aa).

3 helical membrane passes run 10 to 30 (FWVF…ISGV), 64 to 84 (IFAL…PWAM), and 88 to 108 (VLGV…IVGS).

This sequence belongs to the complex I subunit 3 family. In terms of assembly, NDH is composed of at least 16 different subunits, 5 of which are encoded in the nucleus.

Its subcellular location is the plastid. It is found in the chloroplast thylakoid membrane. The catalysed reaction is a plastoquinone + NADH + (n+1) H(+)(in) = a plastoquinol + NAD(+) + n H(+)(out). The enzyme catalyses a plastoquinone + NADPH + (n+1) H(+)(in) = a plastoquinol + NADP(+) + n H(+)(out). Its function is as follows. NDH shuttles electrons from NAD(P)H:plastoquinone, via FMN and iron-sulfur (Fe-S) centers, to quinones in the photosynthetic chain and possibly in a chloroplast respiratory chain. The immediate electron acceptor for the enzyme in this species is believed to be plastoquinone. Couples the redox reaction to proton translocation, and thus conserves the redox energy in a proton gradient. The polypeptide is NAD(P)H-quinone oxidoreductase subunit 3, chloroplastic (Pelargonium hortorum (Common geranium)).